Reading from the N-terminus, the 415-residue chain is Tyrosine--tRNA ligase (415 aa).

Residues P54–H63 carry the 'HIGH' region motif. The 'KMSKS' region motif lies at K248 to S252. K251 serves as a coordination point for ATP. An S4 RNA-binding domain is found at A351–R415.

This sequence belongs to the class-I aminoacyl-tRNA synthetase family. TyrS type 2 subfamily. Homodimer.

It localises to the cytoplasm. It carries out the reaction tRNA(Tyr) + L-tyrosine + ATP = L-tyrosyl-tRNA(Tyr) + AMP + diphosphate + H(+). Functionally, catalyzes the attachment of tyrosine to tRNA(Tyr) in a two-step reaction: tyrosine is first activated by ATP to form Tyr-AMP and then transferred to the acceptor end of tRNA(Tyr). The protein is Tyrosine--tRNA ligase of Prochlorococcus marinus (strain MIT 9313).